The following is a 238-amino-acid chain: Protein-lysine N-methyltransferase efm4 (238 aa).

Belongs to the class I-like SAM-binding methyltransferase superfamily. EFM4 family.

It localises to the cytoplasm. The protein localises to the nucleus. In terms of biological role, S-adenosyl-L-methionine-dependent protein-lysine N-methyltransferase that mono- and dimethylates elongation factor 1-alpha at 'Lys-316'. May play a role in intracellular transport. The chain is Protein-lysine N-methyltransferase efm4 from Schizosaccharomyces pombe (strain 972 / ATCC 24843) (Fission yeast).